We begin with the raw amino-acid sequence, 476 residues long: MKILHVCSELYPLLKTGGLADVLGALPQAQNQIGLDARVLLPAYPAIIAGIQNTQVVAEFDNFAGHVVLRYGEYNGVGIYLIDAPHLYGREGNPYHDAYYNDYGDNYKRFALLGWVGAELATGLDSWWRAEVVHAHDWHAGLCAAYLFNKGRPAKSVFTIHNLAYQGQFSYHHLYEIGLPTGMFHVEGLELFGQISYLKSGLFYSDASTAVSPTYAEEITTPEFAYGLQGLLSGLKAQGRLVGILNGVDENIWHPNVDQYIPHHYKLKYMAGKKKNKAELQAYFNLPQDESALAFVMVTRLTEQKGVDLLIESADEIVKQGGQLMILGSGAPHFEQGIRELAERYPQNIAVKIGYDEALSHLMVAGGDVILVPSRFEPCGLTQLYGLQYGTLPLVRKTGGLADTVVDSTSESIKARTATGFVFESATPEALRHCLQRAFALWQKPRAWAMVRTDAMEQDFSWRKAAEQYRTLYERL.

Lysine 15 provides a ligand contact to ADP-alpha-D-glucose.

This sequence belongs to the glycosyltransferase 1 family. Bacterial/plant glycogen synthase subfamily.

The enzyme catalyses [(1-&gt;4)-alpha-D-glucosyl](n) + ADP-alpha-D-glucose = [(1-&gt;4)-alpha-D-glucosyl](n+1) + ADP + H(+). Its pathway is glycan biosynthesis; glycogen biosynthesis. Functionally, synthesizes alpha-1,4-glucan chains using ADP-glucose. In Haemophilus influenzae (strain 86-028NP), this protein is Glycogen synthase.